A 149-amino-acid polypeptide reads, in one-letter code: 3-dehydroquinate dehydratase (149 aa).

The active-site Proton acceptor is Y26. Residues N78, H84, and D91 each contribute to the substrate site. The Proton donor role is filled by H104. Residues 105 to 106 (IS) and R115 each bind substrate.

It belongs to the type-II 3-dehydroquinase family. As to quaternary structure, homododecamer.

It catalyses the reaction 3-dehydroquinate = 3-dehydroshikimate + H2O. It participates in metabolic intermediate biosynthesis; chorismate biosynthesis; chorismate from D-erythrose 4-phosphate and phosphoenolpyruvate: step 3/7. Its function is as follows. Catalyzes a trans-dehydration via an enolate intermediate. This chain is 3-dehydroquinate dehydratase (aroQ), found in Buchnera aphidicola subsp. Schizaphis graminum (strain Sg).